A 241-amino-acid chain; its full sequence is NAD(P)H-hydrate epimerase (241 aa).

In terms of domain architecture, YjeF N-terminal spans 11-221; sequence AASLDKDLME…SIVEKYGLNC (211 aa). 65-69 serves as a coordination point for (6S)-NADPHX; the sequence is NNGGD. 2 residues coordinate K(+): Asn66 and Asp127. (6S)-NADPHX-binding positions include 131-137 and Asp160; that span reads GFSFGGP. A K(+)-binding site is contributed by Ser163.

The protein belongs to the NnrE/AIBP family. K(+) is required as a cofactor.

It is found in the cytoplasm. The protein resides in the mitochondrion. It carries out the reaction (6R)-NADHX = (6S)-NADHX. It catalyses the reaction (6R)-NADPHX = (6S)-NADPHX. Catalyzes the epimerization of the S- and R-forms of NAD(P)HX, a damaged form of NAD(P)H that is a result of enzymatic or heat-dependent hydration. This is a prerequisite for the S-specific NAD(P)H-hydrate dehydratase to allow the repair of both epimers of NAD(P)HX. This is NAD(P)H-hydrate epimerase from Aspergillus fumigatus (strain ATCC MYA-4609 / CBS 101355 / FGSC A1100 / Af293) (Neosartorya fumigata).